A 317-amino-acid polypeptide reads, in one-letter code: Low affinity immunoglobulin gamma Fc region receptor II-a (317 aa).

A signal peptide spans 1–33 (MTMETQMSQNVCPRNLWLLQPLTVLLLLASADS). Over 34-217 (QAAAPPKAVL…PSMGSSSPMG (184 aa)) the chain is Extracellular. 2 Ig-like C2-type domains span residues 39–118 (PKAV…VHLT) and 122–204 (EWLV…VTIT). Cystine bridges form between cysteine 62-cysteine 104 and cysteine 143-cysteine 187. 2 N-linked (GlcNAc...) asparagine glycosylation sites follow: asparagine 97 and asparagine 178. The helical transmembrane segment at 218 to 240 (IIVAVVIATAVAAIVAAVVALIY) threads the bilayer. The Cytoplasmic portion of the chain corresponds to 241–317 (CRKKRISANS…PPNDHVNSNN (77 aa)). A phosphotyrosine; by SRC-type Tyr-kinases mark is found at tyrosine 288 and tyrosine 304. A disordered region spans residues 292-317 (NPRAPTDDDKNIYLTLPPNDHVNSNN).

Interacts with IGHG1. Interacts with INPP5D/SHIP1 and INPPL1/SHIP2, regulating its function. Interacts with APCS and FGR. Interacts with HCK. Post-translationally, phosphorylated by SRC-type Tyr-kinases such as LYN, BLK, FYN, HCK and SYK. Found on monocytes, neutrophils and eosinophil platelets.

The protein resides in the cell membrane. Its function is as follows. Binds to the Fc region of immunoglobulins gamma. Low affinity receptor. By binding to IgG it initiates cellular responses against pathogens and soluble antigens. Promotes phagocytosis of opsonized antigens. In Homo sapiens (Human), this protein is Low affinity immunoglobulin gamma Fc region receptor II-a (FCGR2A).